Consider the following 282-residue polypeptide: DNA processing protein DprA (282 aa).

This sequence belongs to the DprA/Smf family. In terms of assembly, homodimer; forms tail-to-tail dimers, forms nucleoprotein complex (NPC) which requires at least 30 nucleotides (nt) of ssDNA becoming optimal with 50 nt. Interacts with RecA, forms mixed DprA-RecA-ssDNA filaments. Interacts with ComFA and ComFC.

It localises to the cytoplasm. In terms of biological role, protein that helps load RecA onto ssDNA during transformation. Required for DNA transformation. Not required for DNA uptake but for a later stage of transformation. Thought to interact at the cell pole with newly imported transforming ssDNA which it binds cooperatively, protecting linear and circular ssDNA from nuclease action. Forms bridges between DNA segments. Favors the loading of RecA onto ssDNA and formation of RecA-DNA filaments, triggering RecA-catalysis of ATP-driven homologous DNA pairing. The polypeptide is DNA processing protein DprA (Streptococcus pneumoniae (strain ATCC BAA-255 / R6)).